We begin with the raw amino-acid sequence, 355 residues long: Probable dual-specificity RNA methyltransferase RlmN 1 (355 aa).

Glu91 (proton acceptor) is an active-site residue. The Radical SAM core domain occupies 99-336 (RADRAAGCLS…THLRRSRGPD (238 aa)). Cys106 and Cys341 are oxidised to a cystine. [4Fe-4S] cluster contacts are provided by Cys113, Cys117, and Cys120. Residues 163–164 (GE), Ser195, 218–220 (SLH), and Asn294 each bind S-adenosyl-L-methionine. Cys341 (S-methylcysteine intermediate) is an active-site residue.

This sequence belongs to the radical SAM superfamily. RlmN family. [4Fe-4S] cluster serves as cofactor.

The protein localises to the cytoplasm. The enzyme catalyses adenosine(2503) in 23S rRNA + 2 reduced [2Fe-2S]-[ferredoxin] + 2 S-adenosyl-L-methionine = 2-methyladenosine(2503) in 23S rRNA + 5'-deoxyadenosine + L-methionine + 2 oxidized [2Fe-2S]-[ferredoxin] + S-adenosyl-L-homocysteine. It carries out the reaction adenosine(37) in tRNA + 2 reduced [2Fe-2S]-[ferredoxin] + 2 S-adenosyl-L-methionine = 2-methyladenosine(37) in tRNA + 5'-deoxyadenosine + L-methionine + 2 oxidized [2Fe-2S]-[ferredoxin] + S-adenosyl-L-homocysteine. Its function is as follows. Specifically methylates position 2 of adenine 2503 in 23S rRNA and position 2 of adenine 37 in tRNAs. This chain is Probable dual-specificity RNA methyltransferase RlmN 1, found in Opitutus terrae (strain DSM 11246 / JCM 15787 / PB90-1).